Reading from the N-terminus, the 674-residue chain is Probable nucleolar GTP-binding protein 1 (674 aa).

The OBG-type G domain occupies 169–346 (RTLLLTGYPN…VKDTACSILF (178 aa)). GTP contacts are provided by residues 175–182 (GYPNVGKS), 221–225 (DTPGI), and 289–292 (NKID). A compositionally biased stretch (basic and acidic residues) spans 518 to 527 (RINHQIKDSS). Disordered stretches follow at residues 518–538 (RINH…RRGI) and 564–674 (VRDH…NDFR). A compositionally biased stretch (basic residues) spans 570-580 (SRISGKKRSRS). Composition is skewed to basic and acidic residues over residues 619-633 (GFHD…DKLD) and 641-653 (NQDG…DRHV).

Belongs to the TRAFAC class OBG-HflX-like GTPase superfamily. OBG GTPase family. NOG subfamily.

It localises to the nucleus. The protein resides in the nucleolus. Involved in the biogenesis of the 60S ribosomal subunit. The chain is Probable nucleolar GTP-binding protein 1 (nog1) from Dictyostelium discoideum (Social amoeba).